The primary structure comprises 1077 residues: Carbamoyl phosphate synthase large chain (1077 aa).

Positions 1 to 403 (MPKRTDIQSI…SLHKALRGLE (403 aa)) are carboxyphosphate synthetic domain. ATP-binding residues include Arg-129, Arg-169, Gly-175, Gly-176, Glu-208, Leu-210, Glu-215, Gly-241, Ile-242, His-243, Gln-285, and Glu-299. The ATP-grasp 1 domain occupies 133–328 (DKAMKSIGLE…IAKIAAKLAV (196 aa)). Mg(2+) contacts are provided by Gln-285, Glu-299, and Asn-301. Mn(2+) is bound by residues Gln-285, Glu-299, and Asn-301. Residues 404–553 (VGATGFDEMV…YSSYDEECEA (150 aa)) form an oligomerization domain region. Positions 554–935 (NPTDKDKIMV…AYAKAELGCG (382 aa)) are carbamoyl phosphate synthetic domain. Residues 678-869 (QAAVERLGLL…LAKIAARVMA (192 aa)) enclose the ATP-grasp 2 domain. Residues Arg-714, Arg-753, Leu-755, Glu-760, Gly-785, Val-786, His-787, Ser-788, Gln-828, and Glu-840 each contribute to the ATP site. 3 residues coordinate Mg(2+): Gln-828, Glu-840, and Asn-842. Mn(2+)-binding residues include Gln-828, Glu-840, and Asn-842. The region spanning 936–1077 (SVYPEGGRAL…HAKVKASLEA (142 aa)) is the MGS-like domain. The interval 936 to 1077 (SVYPEGGRAL…HAKVKASLEA (142 aa)) is allosteric domain.

This sequence belongs to the CarB family. Composed of two chains; the small (or glutamine) chain promotes the hydrolysis of glutamine to ammonia, which is used by the large (or ammonia) chain to synthesize carbamoyl phosphate. Tetramer of heterodimers (alpha,beta)4. Mg(2+) is required as a cofactor. Requires Mn(2+) as cofactor.

The catalysed reaction is hydrogencarbonate + L-glutamine + 2 ATP + H2O = carbamoyl phosphate + L-glutamate + 2 ADP + phosphate + 2 H(+). It carries out the reaction hydrogencarbonate + NH4(+) + 2 ATP = carbamoyl phosphate + 2 ADP + phosphate + 2 H(+). It functions in the pathway amino-acid biosynthesis; L-arginine biosynthesis; carbamoyl phosphate from bicarbonate: step 1/1. The protein operates within pyrimidine metabolism; UMP biosynthesis via de novo pathway; (S)-dihydroorotate from bicarbonate: step 1/3. Functionally, large subunit of the glutamine-dependent carbamoyl phosphate synthetase (CPSase). CPSase catalyzes the formation of carbamoyl phosphate from the ammonia moiety of glutamine, carbonate, and phosphate donated by ATP, constituting the first step of 2 biosynthetic pathways, one leading to arginine and/or urea and the other to pyrimidine nucleotides. The large subunit (synthetase) binds the substrates ammonia (free or transferred from glutamine from the small subunit), hydrogencarbonate and ATP and carries out an ATP-coupled ligase reaction, activating hydrogencarbonate by forming carboxy phosphate which reacts with ammonia to form carbamoyl phosphate. The protein is Carbamoyl phosphate synthase large chain of Vibrio parahaemolyticus serotype O3:K6 (strain RIMD 2210633).